The sequence spans 226 residues: Leucyl/phenylalanyl-tRNA--protein transferase (226 aa).

Belongs to the L/F-transferase family.

It localises to the cytoplasm. The enzyme catalyses N-terminal L-lysyl-[protein] + L-leucyl-tRNA(Leu) = N-terminal L-leucyl-L-lysyl-[protein] + tRNA(Leu) + H(+). It catalyses the reaction N-terminal L-arginyl-[protein] + L-leucyl-tRNA(Leu) = N-terminal L-leucyl-L-arginyl-[protein] + tRNA(Leu) + H(+). It carries out the reaction L-phenylalanyl-tRNA(Phe) + an N-terminal L-alpha-aminoacyl-[protein] = an N-terminal L-phenylalanyl-L-alpha-aminoacyl-[protein] + tRNA(Phe). Its function is as follows. Functions in the N-end rule pathway of protein degradation where it conjugates Leu, Phe and, less efficiently, Met from aminoacyl-tRNAs to the N-termini of proteins containing an N-terminal arginine or lysine. This Bradyrhizobium diazoefficiens (strain JCM 10833 / BCRC 13528 / IAM 13628 / NBRC 14792 / USDA 110) protein is Leucyl/phenylalanyl-tRNA--protein transferase.